The chain runs to 450 residues: Grayanic acid biosynthesis cluster O-methyltransferase (450 aa).

S-adenosyl-L-methionine is bound at residue aspartate 254. The active-site Proton acceptor is histidine 301.

It belongs to the class I-like SAM-binding methyltransferase superfamily. Cation-independent O-methyltransferase family. COMT subfamily.

It functions in the pathway secondary metabolite biosynthesis. Non-reducing polyketide synthase; part of the gene cluster that mediates the biosynthesis of orcinol depsidone grayanic acid (GRA), the only major secondary metabolite known in C.grayi. The first step consists in the ring and depside synthesis by PKS16 leading to 4-O-demethylsphaerophorin, involving different orcinol-like rings, one with acetyl CoA and the other with octanoyl CoA as the starter. Further depsidone formation by the GRA cluster-specific cytochrome P450 leads to 4-O-demethylgrayanic acid. Finally, the cluster specific O-methyltransferase probably converts the 4-O-demethylgrayanic acid into grayanic acid. This Cladonia grayi (Gray's cup lichen) protein is Grayanic acid biosynthesis cluster O-methyltransferase.